A 119-amino-acid chain; its full sequence is MISKPDKNKLRLKRHKRIRGKISGTAERPRLSVFRSNKNIYAQLIDDVEGVTLASASTNDKNISAEGSKMEQAAEVGKALAETAAKKNIKSVVFDRSGYLYHGRIQALADAARENGLEF.

This sequence belongs to the universal ribosomal protein uL18 family. In terms of assembly, part of the 50S ribosomal subunit; part of the 5S rRNA/L5/L18/L25 subcomplex. Contacts the 5S and 23S rRNAs.

Its function is as follows. This is one of the proteins that bind and probably mediate the attachment of the 5S RNA into the large ribosomal subunit, where it forms part of the central protuberance. The sequence is that of Large ribosomal subunit protein uL18 from Lactobacillus johnsonii (strain CNCM I-12250 / La1 / NCC 533).